A 152-amino-acid chain; its full sequence is ESAT-6 secretion machinery protein EssA (152 aa).

Over 1–114 (MLMNSVIALT…PYIQNKQEKK (114 aa)) the chain is Cytoplasmic. A helical transmembrane segment spans residues 115–135 (IFPYILMSVGAFLTLGFVIFS). Over 136–152 (IHKGRRTKNESARKSNI) the chain is Extracellular.

It belongs to the EssA family.

The protein localises to the cell membrane. In terms of biological role, component of the ESAT-6 secretion system (Ess). Required for the secretion of EsxA. The chain is ESAT-6 secretion machinery protein EssA from Staphylococcus aureus (strain MRSA252).